Reading from the N-terminus, the 95-residue chain is Acyl carrier protein (95 aa).

A Carrier domain is found at 4 to 79; sequence KEIFERIEQV…HVMELTLDLV (76 aa). Serine 39 carries the post-translational modification O-(pantetheine 4'-phosphoryl)serine.

The protein belongs to the acyl carrier protein (ACP) family. Post-translationally, 4'-phosphopantetheine is transferred from CoA to a specific serine of apo-ACP by AcpS. This modification is essential for activity because fatty acids are bound in thioester linkage to the sulfhydryl of the prosthetic group.

The protein localises to the cytoplasm. It functions in the pathway lipid metabolism; fatty acid biosynthesis. Carrier of the growing fatty acid chain in fatty acid biosynthesis. The polypeptide is Acyl carrier protein (Saccharopolyspora erythraea (strain ATCC 11635 / DSM 40517 / JCM 4748 / NBRC 13426 / NCIMB 8594 / NRRL 2338)).